Consider the following 429-residue polypeptide: Glutamyl-tRNA reductase (429 aa).

Substrate contacts are provided by residues 50 to 53 (TCNR), Ser-116, 121 to 123 (EPQ), and Gln-127. Cys-51 (nucleophile) is an active-site residue. NADP(+) is bound at residue 196-201 (GAGEMA).

The protein belongs to the glutamyl-tRNA reductase family. In terms of assembly, homodimer.

It carries out the reaction (S)-4-amino-5-oxopentanoate + tRNA(Glu) + NADP(+) = L-glutamyl-tRNA(Glu) + NADPH + H(+). It functions in the pathway porphyrin-containing compound metabolism; protoporphyrin-IX biosynthesis; 5-aminolevulinate from L-glutamyl-tRNA(Glu): step 1/2. Catalyzes the NADPH-dependent reduction of glutamyl-tRNA(Glu) to glutamate 1-semialdehyde (GSA). The protein is Glutamyl-tRNA reductase of Thermodesulfovibrio yellowstonii (strain ATCC 51303 / DSM 11347 / YP87).